A 79-amino-acid chain; its full sequence is Hematopoietic cell signal transducer (79 aa).

A signal peptide spans 1–18; sequence MAPPGHLLFLFLLPVAAS. Over 19–35 the chain is Extracellular; it reads QTNEGSCSGCGPLSLPL. The chain crosses the membrane as a helical span at residues 36–56; that stretch reads LAGLVAADAVMSLLIVGVVFV. Residues 57-79 are Cytoplasmic-facing; sequence CMRLHSRPAQEDGRVYINMPGRG. Y72 is modified (phosphotyrosine). Residues 72 to 74 are GRB2 binding site; that stretch reads YIN. Positions 72–75 are PIK3R1 binding site; sequence YINM.

The protein belongs to the DAP10 family. Homodimer; Disulfide-linked. Heterohexamer composed of four subunits of HCST/DAP10 and two subunits of KLRK1. Interacts (via transmembrane domain) with KLRK1 (via transmembrane domain); the interaction is required for KLRK1 NK cell surface and induces NK cell-mediated cytotoxicity. Interacts with PIK3R1 and GRB2. Interacts with CLEC5A. Forms an CLEC5A/TYROBP/HCST trimolecular complex depending almost solely on TYROBP. Interacts with CD300H. Phosphorylated; PIK3R1 and GRB2 associate specifically with tyrosine-phosphorylated HCST. Post-translationally, O-glycosylated.

Its subcellular location is the membrane. Its function is as follows. Transmembrane adapter protein which associates with KLRK1 to form an activation receptor KLRK1-HCST in lymphoid and myeloid cells; this receptor plays a major role in triggering cytotoxicity against target cells expressing cell surface ligands such as MHC class I chain-related MICA and MICB, and UL16-binding proteins (ULBPs); these ligands are up-regulated by stress conditions and pathological state such as viral infection and tumor transformation. Functions as a docking site for PI3-kinase PIK3R1 and GRB2. Interaction of ULBPs with KLRK1-HCST triggers calcium mobilization and activation of the PIK3R1, MAP2K/ERK, and JAK2/STAT5 signaling pathways. Both PIK3R1 and GRB2 are required for full KLRK1-HCST-mediated activation and ultimate killing of target cells. In NK cells, KLRK1-HCST signaling directly induces cytotoxicity and enhances cytokine production initiated via DAP12/TYROBP-associated receptors. In T-cells, it provides primarily costimulation for TCR-induced signals. KLRK1-HCST receptor plays a role in immune surveillance against tumors and is required for cytolysis of tumors cells; indeed, melanoma cells that do not express KLRK1 ligands escape from immune surveillance mediated by NK cells. This chain is Hematopoietic cell signal transducer (Hcst), found in Rattus norvegicus (Rat).